The sequence spans 275 residues: Mitochondrial outer membrane protein porin (275 aa).

M1 is modified (blocked amino end (Met)).

This sequence belongs to the eukaryotic mitochondrial porin family. Highly divergent.

It is found in the mitochondrion outer membrane. Its function is as follows. Forms a channel of about 1,7 nM through the cell membrane that allows diffusion of small hydrophilic molecules. The channel adopts an open conformation at low or zero membrane potential and a closed conformation at potentials above 20 mv. The open state has a weak anion selectivity whereas the closed state is cation-selective. This chain is Mitochondrial outer membrane protein porin (porA), found in Dictyostelium discoideum (Social amoeba).